Consider the following 201-residue polypeptide: 3-isopropylmalate dehydratase small subunit (201 aa).

The protein belongs to the LeuD family. LeuD type 1 subfamily. In terms of assembly, heterodimer of LeuC and LeuD.

The catalysed reaction is (2R,3S)-3-isopropylmalate = (2S)-2-isopropylmalate. The protein operates within amino-acid biosynthesis; L-leucine biosynthesis; L-leucine from 3-methyl-2-oxobutanoate: step 2/4. Its function is as follows. Catalyzes the isomerization between 2-isopropylmalate and 3-isopropylmalate, via the formation of 2-isopropylmaleate. The polypeptide is 3-isopropylmalate dehydratase small subunit (Allorhizobium ampelinum (strain ATCC BAA-846 / DSM 112012 / S4) (Agrobacterium vitis (strain S4))).